A 308-amino-acid polypeptide reads, in one-letter code: Protein translocase subunit SecF (308 aa).

6 helical membrane passes run Ala22–Tyr42, Ile140–Val160, Trp164–Phe184, Leu194–Ile214, Ile246–Ala266, and Val272–Ile292.

It belongs to the SecD/SecF family. SecF subfamily. In terms of assembly, forms a complex with SecD. Part of the essential Sec protein translocation apparatus which comprises SecA, SecYEG and auxiliary proteins SecDF-YajC and YidC.

The protein localises to the cell inner membrane. In terms of biological role, part of the Sec protein translocase complex. Interacts with the SecYEG preprotein conducting channel. SecDF uses the proton motive force (PMF) to complete protein translocation after the ATP-dependent function of SecA. This is Protein translocase subunit SecF from Rickettsia akari (strain Hartford).